Reading from the N-terminus, the 187-residue chain is Adenylate kinase (187 aa).

Residue 10-15 (GSGKGT) coordinates ATP. The segment at 30–59 (STGDLLRSEVVAGTPLGLQAKQVMAQGDLV) is NMP. Residues Thr31, Arg36, 57–59 (DLV), 85–88 (GYPR), and Gln92 each bind AMP. The segment at 126–136 (GRAQAEGREDD) is LID. Residue Arg127 coordinates ATP. 2 residues coordinate AMP: Arg133 and Arg144. Gly172 is a binding site for ATP.

Belongs to the adenylate kinase family. Monomer.

It localises to the cytoplasm. The catalysed reaction is AMP + ATP = 2 ADP. It participates in purine metabolism; AMP biosynthesis via salvage pathway; AMP from ADP: step 1/1. Its function is as follows. Catalyzes the reversible transfer of the terminal phosphate group between ATP and AMP. Plays an important role in cellular energy homeostasis and in adenine nucleotide metabolism. The sequence is that of Adenylate kinase from Xylella fastidiosa (strain 9a5c).